Here is a 1723-residue protein sequence, read N- to C-terminus: Lymphocyte antigen 75 (1723 aa).

Positions 1–27 are cleaved as a signal peptide; sequence MRTGRVTPGLAAGLLLLLLRSFGLVEP. The Extracellular segment spans residues 28–1667; it reads SESSGNDPFT…AVCKIPLSPD (1640 aa). The Ricin B-type lectin domain occupies 33-182; the sequence is NDPFTIVHEN…FLIGETWYHD (150 aa). An N-linked (GlcNAc...) asparagine glycan is attached at asparagine 135. Positions 164 to 211 constitute a Fibronectin type-II domain; that stretch reads SYGRPCEFPFLIGETWYHDCIHDEDHSGPWCATTLSYEYDQKWGICLL. 4 disulfides stabilise this stretch: cysteine 169–cysteine 194, cysteine 183–cysteine 209, cysteine 247–cysteine 340, and cysteine 317–cysteine 332. Positions 225–341 constitute a C-type lectin 1 domain; that stretch reads QIGSCYQFNN…CESQQPYVCK (117 aa). Residues asparagine 345 and asparagine 377 are each glycosylated (N-linked (GlcNAc...) asparagine). 3 consecutive C-type lectin domains span residues 368-486, 493-625, and 652-791; these read NNGF…YVCK, KDAE…ICKK, and SSLS…WVCQ. Intrachain disulfides connect cysteine 389–cysteine 485 and cysteine 462–cysteine 477. The N-linked (GlcNAc...) asparagine glycan is linked to asparagine 529. Cystine bridges form between cysteine 597–cysteine 614, cysteine 678–cysteine 790, and cysteine 752–cysteine 782. N-linked (GlcNAc...) asparagine glycosylation is found at asparagine 843 and asparagine 865. Tyrosine 934 bears the Phosphotyrosine mark. Residues asparagine 935, asparagine 1077, and asparagine 1104 are each glycosylated (N-linked (GlcNAc...) asparagine). A C-type lectin 5 domain is found at 959–1092; the sequence is FQNKCFLKVN…ERHSLSLCQK (134 aa). A disulfide bond links cysteine 1061 and cysteine 1081. In terms of domain architecture, C-type lectin 6 spans 1111 to 1223; the sequence is YLNNLYKIIS…DNQPGAICYY (113 aa). A disulfide bridge connects residues cysteine 1198 and cysteine 1212. Asparagine 1226, asparagine 1321, and asparagine 1393 each carry an N-linked (GlcNAc...) asparagine glycan. One can recognise a C-type lectin 7 domain in the interval 1252 to 1375; sequence FQNSCYNFMI…VIEETLHFYQ (124 aa). 2 C-type lectin domains span residues 1402–1514 and 1543–1662; these read YKDG…ICYK and YGGH…VCKI. Residues cysteine 1489 and cysteine 1503 are joined by a disulfide bond. N-linked (GlcNAc...) asparagine glycosylation is found at asparagine 1594 and asparagine 1627. A disulfide bridge links cysteine 1636 with cysteine 1651. A helical membrane pass occupies residues 1668–1692; that stretch reads YTGIAILFAVLCLLGLISLAIWFLL. The Cytoplasmic portion of the chain corresponds to 1693–1723; it reads QRSHIRWTGFSSVRYEHGTNEDEVMLPSFHD. Phosphoserine is present on residues serine 1704 and serine 1720.

N-glycosylated. Expressed in dendritic and thymic epithelial cells and lymph nodes.

The protein localises to the membrane. In terms of biological role, acts as an endocytic receptor to direct captured antigens from the extracellular space to a specialized antigen-processing compartment. Causes reduced proliferation of B lymphocytes. In Mus musculus (Mouse), this protein is Lymphocyte antigen 75 (Ly75).